The primary structure comprises 493 residues: Dipeptide permease D (493 aa).

Helical transmembrane passes span V14–L34, A49–A69, L91–V111, G138–C158, W167–C187, N212–W232, W235–Y255, L267–G287, M312–I332, I344–L364, L379–M399, V413–I433, and V458–L478.

This sequence belongs to the major facilitator superfamily. Proton-dependent oligopeptide transporter (POT/PTR) (TC 2.A.17) family. DtpD subfamily.

It is found in the cell inner membrane. Its function is as follows. Probable proton-dependent permease that transports dipeptides. This chain is Dipeptide permease D, found in Citrobacter rodentium (strain ICC168) (Citrobacter freundii biotype 4280).